A 100-amino-acid chain; its full sequence is UPF0473 protein Lm4b_01511 (100 aa).

The protein belongs to the UPF0473 family.

The chain is UPF0473 protein Lm4b_01511 from Listeria monocytogenes serotype 4b (strain CLIP80459).